The following is a 673-amino-acid chain: Probable boron transporter 7 (673 aa).

Topologically, residues 1–35 (MEGVKFPFGGIINDFNGRRKCYKQDWLAAFNSGVR) are cytoplasmic. The helical transmembrane segment at 36 to 56 (ILAPTLYIFIASALPVIAFGE) threads the bilayer. Topologically, residues 57 to 75 (QLSRETDRSLGIAESLAST) are extracellular. A helical transmembrane segment spans residues 76–96 (ALCGIIHSVFGGQPLLIVGVA). At 97–121 (EPTIIMYTYLHSFSKSRPELGQKLY) the chain is on the cytoplasmic side. Residues 122–142 (LAWAGWVCVWTAVLLMLLAML) form a helical membrane-spanning segment. Topologically, residues 143–160 (NACNIISRFTRIAGELFG) are extracellular. The chain crosses the membrane as a helical span at residues 161 to 181 (MLITVLFIQEAVKGLIGEFLV). Residues 182–197 (PKSDDPSLEVYQFQWR) are Cytoplasmic-facing. Residues 198–218 (YTNGLLAVIFSFGLLYTALKS) form a helical membrane-spanning segment. Residues 219–233 (RRARSWKYGFRWMRG) lie on the Extracellular side of the membrane. The chain crosses the membrane as a helical span at residues 234–254 (FIGDYGTLLMLVLWSAFSYTV). Residues 255–289 (PRNLPEGVPRRLELPLPWASESLYHWTVVKDMAKV) are Cytoplasmic-facing. A helical transmembrane segment spans residues 290 to 310 (PPLYILAAFIPAIMIAGLYFF). Topologically, residues 311–330 (DHCVSAQMAQQKEFNLKNPT) are extracellular. The helical transmembrane segment at 331-351 (AYHYDIFILGIMTLICGLLGL) threads the bilayer. At 352–468 (PPSNGVIPQS…EQRVSNLLQS (117 aa)) the chain is on the cytoplasmic side. A helical transmembrane segment spans residues 469–489 (VLVGLLILAVPVLRMIPTSVL). Topologically, residues 490 to 556 (WGYFTYMAVD…QLLYFLICYG (67 aa)) are extracellular. Residues 557-577 (VTWIPVGGILFPLPFFILIAL) traverse the membrane as a helical segment. The Cytoplasmic segment spans residues 578–673 (RQYILQRLFD…SQMVKIYNHS (96 aa)).

This sequence belongs to the anion exchanger (TC 2.A.31.3) family.

It is found in the membrane. Putative boron transporter. Boron is essential for maintaining the integrity of plants cell walls. This Arabidopsis thaliana (Mouse-ear cress) protein is Probable boron transporter 7 (BOR7).